We begin with the raw amino-acid sequence, 257 residues long: Probable septum site-determining protein MinC (257 aa).

The protein belongs to the MinC family. Interacts with MinD and FtsZ.

Its function is as follows. Cell division inhibitor that blocks the formation of polar Z ring septums. Rapidly oscillates between the poles of the cell to destabilize FtsZ filaments that have formed before they mature into polar Z rings. Prevents FtsZ polymerization. This is Probable septum site-determining protein MinC from Burkholderia lata (strain ATCC 17760 / DSM 23089 / LMG 22485 / NCIMB 9086 / R18194 / 383).